The following is a 224-amino-acid chain: Ribonuclease 3 (224 aa).

In terms of domain architecture, RNase III spans 5 to 127 (LERLCRRLNY…ILAAIYLDGG (123 aa)). Glu-40 contributes to the Mg(2+) binding site. The active site involves Asp-44. Residues Asp-113 and Glu-116 each contribute to the Mg(2+) site. Residue Glu-116 is part of the active site. The 71-residue stretch at 154 to 224 (DAKTQLQEFL…AKAMLEQLQG (71 aa)) folds into the DRBM domain.

Belongs to the ribonuclease III family. Homodimer. Mg(2+) serves as cofactor.

The protein localises to the cytoplasm. The catalysed reaction is Endonucleolytic cleavage to 5'-phosphomonoester.. Functionally, digests double-stranded RNA. Involved in the processing of primary rRNA transcript to yield the immediate precursors to the large and small rRNAs (23S and 16S). Processes some mRNAs, and tRNAs when they are encoded in the rRNA operon. Processes pre-crRNA and tracrRNA of type II CRISPR loci if present in the organism. In Legionella pneumophila (strain Lens), this protein is Ribonuclease 3.